Consider the following 204-residue polypeptide: Paraneoplastic antigen-like protein 8C (204 aa).

Residues 135–204 form a disordered region; sequence PPATGPRELP…RRHHASDKKL (70 aa). Residues 182 to 204 show a composition bias toward basic residues; sequence VGKRGKRKNKKNRRRHHASDKKL.

This sequence belongs to the PNMA family.

This is Paraneoplastic antigen-like protein 8C from Homo sapiens (Human).